Here is a 311-residue protein sequence, read N- to C-terminus: Coproporphyrin III ferrochelatase 1 (311 aa).

Fe-coproporphyrin III-binding positions include tyrosine 12, arginine 29, 45–46, serine 53, and tyrosine 124; that span reads RY. Fe(2+) contacts are provided by histidine 182 and glutamate 263.

It belongs to the ferrochelatase family.

The protein localises to the cytoplasm. The enzyme catalyses Fe-coproporphyrin III + 2 H(+) = coproporphyrin III + Fe(2+). It participates in porphyrin-containing compound metabolism; protoheme biosynthesis. Involved in coproporphyrin-dependent heme b biosynthesis. Catalyzes the insertion of ferrous iron into coproporphyrin III to form Fe-coproporphyrin III. This Bacillus cereus (strain ATCC 10987 / NRS 248) protein is Coproporphyrin III ferrochelatase 1.